A 361-amino-acid polypeptide reads, in one-letter code: Ribosomal RNA large subunit methyltransferase M (361 aa).

Residues S193, 226-229 (CPGG), D245, D265, and D283 contribute to the S-adenosyl-L-methionine site. K312 functions as the Proton acceptor in the catalytic mechanism.

This sequence belongs to the class I-like SAM-binding methyltransferase superfamily. RNA methyltransferase RlmE family. RlmM subfamily. As to quaternary structure, monomer.

The protein resides in the cytoplasm. The catalysed reaction is cytidine(2498) in 23S rRNA + S-adenosyl-L-methionine = 2'-O-methylcytidine(2498) in 23S rRNA + S-adenosyl-L-homocysteine + H(+). Functionally, catalyzes the 2'-O-methylation at nucleotide C2498 in 23S rRNA. In Histophilus somni (strain 129Pt) (Haemophilus somnus), this protein is Ribosomal RNA large subunit methyltransferase M.